The sequence spans 87 residues: Putative sodium channel toxin Ts38 (87 aa).

The signal sequence occupies residues 1–22 (MKHLKFYSILFLFSIFVYKVNA). Disulfide bonds link Cys-42-Cys-65, Cys-51-Cys-72, and Cys-55-Cys-74.

It belongs to the long (3 C-C) scorpion toxin superfamily. Sodium channel inhibitor family. As to expression, expressed by the venom gland.

The protein resides in the secreted. Its function is as follows. Putative sodium channel toxin. The polypeptide is Putative sodium channel toxin Ts38 (Tityus serrulatus (Brazilian scorpion)).